A 521-amino-acid chain; its full sequence is Cytochrome P450 1A1 (521 aa).

Phe-229 is a binding site for substrate. A heme-binding site is contributed by Cys-463.

It belongs to the cytochrome P450 family. It depends on heme as a cofactor.

It localises to the endoplasmic reticulum membrane. Its subcellular location is the microsome membrane. It carries out the reaction an organic molecule + reduced [NADPH--hemoprotein reductase] + O2 = an alcohol + oxidized [NADPH--hemoprotein reductase] + H2O + H(+). Its function is as follows. Cytochromes P450 are a group of heme-thiolate monooxygenases. They oxidize a variety of structurally unrelated compounds, including steroids, fatty acids, and xenobiotics. The protein is Cytochrome P450 1A1 (cyp1a1) of Oryzias latipes (Japanese rice fish).